The primary structure comprises 372 residues: MSERSYYDILGVSKSANDEEIKSAYRKLAIKYHPDKNKGNKESEEKFKEATEAYEILRDPKKRQAYDQFGKAGVSGGAGGFGQGAYTDFSDIFGDFGDIFGDFFGGGRSSGFGGGRRSGPQRGSDLRYNLEVSLEDAALGREYKIEIPRLESCVDCNGSGASKGSSPATCPDCGGSGQIRRTQGFFSVATTCPTCRGKGTIISNPCRSCGGQGLQEKRRTINIKIPPGVETGSRLKVSGEGEAGPNGGPHGDLYVVTHIKKHELFERQGNDLILVRKISLAQAILGAEIEVPTIDGKKAKMKIPEGTESGQVFRLKGHGMPYLGAYGKGDQHVIVKIEIPKKITRRQRELIEEFARESGENIPGSKGKIFTK.

Residues 5-70 (SYYDILGVSK…KKRQAYDQFG (66 aa)) enclose the J domain. The CR-type zinc finger occupies 140 to 218 (GREYKIEIPR…CGGQGLQEKR (79 aa)). Zn(2+)-binding residues include C153, C156, C170, C173, C192, C195, C206, and C209. 4 CXXCXGXG motif repeats span residues 153–160 (CVDCNGSG), 170–177 (CPDCGGSG), 192–199 (CPTCRGKG), and 206–213 (CRSCGGQG).

The protein belongs to the DnaJ family. As to quaternary structure, homodimer. Zn(2+) serves as cofactor.

Its subcellular location is the cytoplasm. Functionally, participates actively in the response to hyperosmotic and heat shock by preventing the aggregation of stress-denatured proteins and by disaggregating proteins, also in an autonomous, DnaK-independent fashion. Unfolded proteins bind initially to DnaJ; upon interaction with the DnaJ-bound protein, DnaK hydrolyzes its bound ATP, resulting in the formation of a stable complex. GrpE releases ADP from DnaK; ATP binding to DnaK triggers the release of the substrate protein, thus completing the reaction cycle. Several rounds of ATP-dependent interactions between DnaJ, DnaK and GrpE are required for fully efficient folding. Also involved, together with DnaK and GrpE, in the DNA replication of plasmids through activation of initiation proteins. In Leptospira interrogans serogroup Icterohaemorrhagiae serovar copenhageni (strain Fiocruz L1-130), this protein is Chaperone protein DnaJ.